The primary structure comprises 171 residues: RNA pyrophosphohydrolase (171 aa).

Residues 6-149 form the Nudix hydrolase domain; that stretch reads GFRPNVGIIL…KREVYRRALK (144 aa). The Nudix box signature appears at 39–60; the sequence is GGIKESESAEQALYRELQEEVG.

It belongs to the Nudix hydrolase family. RppH subfamily. A divalent metal cation serves as cofactor.

Its function is as follows. Accelerates the degradation of transcripts by removing pyrophosphate from the 5'-end of triphosphorylated RNA, leading to a more labile monophosphorylated state that can stimulate subsequent ribonuclease cleavage. The polypeptide is RNA pyrophosphohydrolase (Teredinibacter turnerae (strain ATCC 39867 / T7901)).